We begin with the raw amino-acid sequence, 374 residues long: U-box domain-containing protein 8 (374 aa).

Positions 4–79 constitute a U-box domain; it reads DLPNDFRCPI…LNFAHVSLKE (76 aa). ARM repeat units lie at residues 126 to 165, 167 to 206, 208 to 248, 250 to 288, and 289 to 327; these read SSIR…NLSL, DDNK…SLAV, EVNK…ALCS, PDNR…KCRG, and GREE…CLCC.

As to expression, expressed in the whole plant.

It catalyses the reaction S-ubiquitinyl-[E2 ubiquitin-conjugating enzyme]-L-cysteine + [acceptor protein]-L-lysine = [E2 ubiquitin-conjugating enzyme]-L-cysteine + N(6)-ubiquitinyl-[acceptor protein]-L-lysine.. It participates in protein modification; protein ubiquitination. Its function is as follows. Functions as an E3 ubiquitin ligase. Involved in the age-dependent pseudo-self-compatibility process. This chain is U-box domain-containing protein 8 (PUB8), found in Arabidopsis thaliana (Mouse-ear cress).